The primary structure comprises 395 residues: Elongation factor Tu (395 aa).

The tr-type G domain occupies 10 to 204 (KPHVNVGTIG…AVDEYIPEPV (195 aa)). Positions 19–26 (GHVDHGKT) are G1. 19-26 (GHVDHGKT) contributes to the GTP binding site. T26 provides a ligand contact to Mg(2+). The G2 stretch occupies residues 60–64 (GITIA). The G3 stretch occupies residues 81-84 (DCPG). Residues 81–85 (DCPGH) and 136–139 (NKVD) contribute to the GTP site. Positions 136–139 (NKVD) are G4. Residues 174–176 (SAL) form a G5 region.

It belongs to the TRAFAC class translation factor GTPase superfamily. Classic translation factor GTPase family. EF-Tu/EF-1A subfamily. Monomer.

The protein localises to the cytoplasm. It carries out the reaction GTP + H2O = GDP + phosphate + H(+). Functionally, GTP hydrolase that promotes the GTP-dependent binding of aminoacyl-tRNA to the A-site of ribosomes during protein biosynthesis. This Exiguobacterium sp. (strain ATCC BAA-1283 / AT1b) protein is Elongation factor Tu.